A 398-amino-acid chain; its full sequence is tRNA (guanine-N(7)-)-methyltransferase (398 aa).

3 residues coordinate S-adenosyl-L-methionine: Glu124, Glu149, and Asp176. Substrate is bound at residue Asp232.

The protein belongs to the class I-like SAM-binding methyltransferase superfamily. TrmB family.

It catalyses the reaction guanosine(46) in tRNA + S-adenosyl-L-methionine = N(7)-methylguanosine(46) in tRNA + S-adenosyl-L-homocysteine. It functions in the pathway tRNA modification; N(7)-methylguanine-tRNA biosynthesis. In terms of biological role, catalyzes the formation of N(7)-methylguanine at position 46 (m7G46) in tRNA. The sequence is that of tRNA (guanine-N(7)-)-methyltransferase from Helicobacter acinonychis (strain Sheeba).